Here is a 198-residue protein sequence, read N- to C-terminus: NAD(P)H dehydrogenase (quinone) (198 aa).

The Flavodoxin-like domain occupies 4–189 (ILVLYYSMYG…SIARYQGEYV (186 aa)). Residues 10–15 (SMYGHI) and 78–80 (TRF) each bind FMN. Tyr-12 contacts NAD(+). Trp-98 serves as a coordination point for substrate. FMN contacts are provided by residues 113–118 (STGTGG) and His-133.

The protein belongs to the WrbA family. FMN serves as cofactor.

It carries out the reaction a quinone + NADH + H(+) = a quinol + NAD(+). The catalysed reaction is a quinone + NADPH + H(+) = a quinol + NADP(+). The sequence is that of NAD(P)H dehydrogenase (quinone) from Salmonella agona (strain SL483).